Reading from the N-terminus, the 515-residue chain is 2-isopropylmalate synthase (515 aa).

Residues 4–266 enclose the Pyruvate carboxyltransferase domain; sequence IKIFDTTLRD…ETGLILKETK (263 aa). Asp13, His201, His203, and Asn237 together coordinate Mn(2+). Positions 392–515 are regulatory domain; the sequence is KLIQFGVSYD…ANLTRLVYES (124 aa).

Belongs to the alpha-IPM synthase/homocitrate synthase family. LeuA type 1 subfamily. As to quaternary structure, homodimer. Requires Mn(2+) as cofactor.

The protein resides in the cytoplasm. It catalyses the reaction 3-methyl-2-oxobutanoate + acetyl-CoA + H2O = (2S)-2-isopropylmalate + CoA + H(+). It participates in amino-acid biosynthesis; L-leucine biosynthesis; L-leucine from 3-methyl-2-oxobutanoate: step 1/4. Catalyzes the condensation of the acetyl group of acetyl-CoA with 3-methyl-2-oxobutanoate (2-ketoisovalerate) to form 3-carboxy-3-hydroxy-4-methylpentanoate (2-isopropylmalate). The chain is 2-isopropylmalate synthase from Oceanobacillus iheyensis (strain DSM 14371 / CIP 107618 / JCM 11309 / KCTC 3954 / HTE831).